A 312-amino-acid polypeptide reads, in one-letter code: Coproporphyrin III ferrochelatase (312 aa).

Fe-coproporphyrin III-binding positions include tyrosine 13, arginine 30, 46–47, serine 54, and tyrosine 125; that span reads RY. Residues histidine 183 and glutamate 264 each contribute to the Fe(2+) site.

This sequence belongs to the ferrochelatase family.

It localises to the cytoplasm. It carries out the reaction Fe-coproporphyrin III + 2 H(+) = coproporphyrin III + Fe(2+). The protein operates within porphyrin-containing compound metabolism; protoheme biosynthesis. Involved in coproporphyrin-dependent heme b biosynthesis. Catalyzes the insertion of ferrous iron into coproporphyrin III to form Fe-coproporphyrin III. This is Coproporphyrin III ferrochelatase from Bacillus pumilus (strain SAFR-032).